The chain runs to 129 residues: Lysozyme C (129 aa).

Residues 1-129 (KVYGRCELAA…VHAWIRGCRL (129 aa)) enclose the C-type lysozyme domain. Cystine bridges form between C6-C127, C30-C115, C64-C80, and C76-C94. Catalysis depends on residues E35 and D52.

It belongs to the glycosyl hydrolase 22 family. Monomer.

It is found in the secreted. It catalyses the reaction Hydrolysis of (1-&gt;4)-beta-linkages between N-acetylmuramic acid and N-acetyl-D-glucosamine residues in a peptidoglycan and between N-acetyl-D-glucosamine residues in chitodextrins.. Its function is as follows. Lysozymes have primarily a bacteriolytic function; those in tissues and body fluids are associated with the monocyte-macrophage system and enhance the activity of immunoagents. This Lophophorus impejanus (Himalayan monal pheasant) protein is Lysozyme C (LYZ).